The following is a 181-amino-acid chain: uncharacterized protein (181 aa).

The Cytoplasmic segment spans residues 1 to 14 (MQKCIMRSTEFKTH). A helical membrane pass occupies residues 15–35 (FSFHSIFSFPLSAALLALISA). Residues 36–58 (SEPASKAFINVQFISSPLVKKEV) lie on the Extracellular side of the membrane. The chain crosses the membrane as a helical span at residues 59–79 (LPFIVSFHSLSSNGILSFSPF). The Cytoplasmic portion of the chain corresponds to 80–84 (TSSNL). A helical transmembrane segment spans residues 85 to 105 (SIAQLPFLIKVPLLSMGSLAL). At 106 to 116 (ENFNKFIPRAD) the chain is on the extracellular side. Residues 117-137 (LVAAWVTIIMVFTFGNFLSTL) form a helical membrane-spanning segment. The Cytoplasmic segment spans residues 138-153 (SIKTGQNLWHLSKISS). The chain crosses the membrane as a helical span at residues 154-174 (SVSPLLLGIILGSQSGEIMLG). Topologically, residues 175-181 (KNLLITS) are extracellular.

It localises to the membrane. This is an uncharacterized protein from Saccharomyces cerevisiae (strain ATCC 204508 / S288c) (Baker's yeast).